A 1228-amino-acid chain; its full sequence is Calcium-transporting ATPase (1228 aa).

The Cytoplasmic segment spans residues 1-63 (MEEVIKNAHT…FELILNQFDD (63 aa)). A helical membrane pass occupies residues 64 to 81 (LLVKILLLAAFISFVLTL). At 82–92 (LDMKHKKIEIC) the chain is on the extracellular side. A helical transmembrane segment spans residues 93–112 (DFIEPLVIVLILILNAAVGV). The Cytoplasmic segment spans residues 113 to 270 (WQECNAEKSL…IDLFGQQLSK (158 aa)). A helical transmembrane segment spans residues 271–291 (IIFVICVTVWIINFKHFSDPI). Topologically, residues 292–300 (HGSFLYGCL) are extracellular. The chain crosses the membrane as a helical span at residues 301–321 (YYFKISVALAVAAIPEGLPAV). Residues 322 to 974 (ITTCLALGTR…IYNNMKAFIR (653 aa)) lie on the Cytoplasmic side of the membrane. The active-site 4-aspartylphosphate intermediate is the aspartate 358. Disordered regions lie at residues 452–478 (MKNDLNNNNNNNNNSSRSGAKRNIPLK) and 562–613 (MPAE…LKNA). A compositionally biased stretch (polar residues) spans 589–604 (FFSSKNDNSHITSTLN). Residue lysine 716 coordinates ATP. A helical transmembrane segment spans residues 975-994 (YLISSNIGEVASIFITALLG). At 995 to 1000 (IPDSLA) the chain is on the extracellular side. A helical membrane pass occupies residues 1001 to 1021 (PVQLLWVNLVTDGLPATALGF). The Cytoplasmic segment spans residues 1022-1042 (NPPEHDVMKCKPRHKNDNLIN). The chain crosses the membrane as a helical span at residues 1043–1067 (GLTLLRYIIIGTYVGIATVSIFVYW). At 1068 to 1118 (FLFYPDSDMHTLINFYQLSHYNQCKAWNNFRVNKVYDMSEDHCSYFSAGKI) the chain is on the extracellular side. The chain crosses the membrane as a helical span at residues 1119–1140 (KASTLSLSVLVLIEMFNALNAL). Topologically, residues 1141 to 1151 (SEYNSLFEIPP) are cytoplasmic. The chain crosses the membrane as a helical span at residues 1152–1172 (WRNMYLVLATIGSLLLHVLIL). At 1173-1185 (YIPPLARIFGVVP) the chain is on the extracellular side. The helical transmembrane segment at 1186-1206 (LSAYDWFLVFLWSFPVIILDE) threads the bilayer. Residues 1207–1228 (IIKFYAKRKLKEEQRTKKIKID) are Cytoplasmic-facing.

Belongs to the cation transport ATPase (P-type) (TC 3.A.3) family.

It is found in the membrane. The catalysed reaction is Ca(2+)(in) + ATP + H2O = Ca(2+)(out) + ADP + phosphate + H(+). In terms of biological role, this magnesium-dependent enzyme catalyzes the hydrolysis of ATP coupled with the transport of the calcium. The protein is Calcium-transporting ATPase (ATP6) of Plasmodium falciparum (isolate K1 / Thailand).